The primary structure comprises 114 residues: Ribonuclease P protein component (114 aa).

This sequence belongs to the RnpA family. Consists of a catalytic RNA component (M1 or rnpB) and a protein subunit.

It catalyses the reaction Endonucleolytic cleavage of RNA, removing 5'-extranucleotides from tRNA precursor.. In terms of biological role, RNaseP catalyzes the removal of the 5'-leader sequence from pre-tRNA to produce the mature 5'-terminus. It can also cleave other RNA substrates such as 4.5S RNA. The protein component plays an auxiliary but essential role in vivo by binding to the 5'-leader sequence and broadening the substrate specificity of the ribozyme. The polypeptide is Ribonuclease P protein component (Borrelia duttonii (strain Ly)).